Here is a 617-residue protein sequence, read N- to C-terminus: ATP-dependent rRNA helicase SPB4 (617 aa).

The Q motif motif lies at 7-35 (WADLDYELQPWIKKAINVSGFDSMTPVQA). Residues 38–224 (IPMFAKNKDV…KTGLRNPVKI (187 aa)) enclose the Helicase ATP-binding domain. 51-58 (SVTGSGKT) contacts ATP. Positions 172 to 175 (DEAD) match the DEAD box motif. The 155-residue stretch at 252–406 (NLIHIMNNIR…ETDINKNKIS (155 aa)) folds into the Helicase C-terminal domain.

It belongs to the DEAD box helicase family. DDX55/SPB4 subfamily. In terms of assembly, component of pre-60S ribosomal complexes.

The protein resides in the nucleus. It is found in the nucleolus. It catalyses the reaction ATP + H2O = ADP + phosphate + H(+). Its function is as follows. ATP-binding RNA helicase involved in the biogenesis of 60S ribosomal subunits. Binds 90S pre-ribosomal particles and dissociates from pre-60S ribosomal particles after processing of 27SB pre-rRNA. Required for the normal formation of 18S rRNA through the processing of pre-rRNAs at sites A0, A1 and A2, and the normal formation of 25S and 5.8S rRNAs through the processing of pre-rRNAs at sites C1 and C2. This chain is ATP-dependent rRNA helicase SPB4, found in Candida glabrata (strain ATCC 2001 / BCRC 20586 / JCM 3761 / NBRC 0622 / NRRL Y-65 / CBS 138) (Yeast).